We begin with the raw amino-acid sequence, 396 residues long: Serine/threonine-protein kinase VRK1 (396 aa).

The Protein kinase domain occupies tryptophan 37–tyrosine 317. ATP contacts are provided by residues isoleucine 43–isoleucine 51 and lysine 71. Lysine 71 participates in a covalent cross-link: Glycyl lysine isopeptide (Lys-Gly) (interchain with G-Cter in SUMO2). The Proton acceptor role is filled by aspartate 177. The interval lysine 352 to lysine 396 is disordered. A compositionally biased stretch (acidic residues) spans glutamate 364–glutamate 374. The residue at position 376 (serine 376) is a Phosphoserine. The tract at residues arginine 387–arginine 393 is required for interaction with the nucleosome.

Belongs to the protein kinase superfamily. CK1 Ser/Thr protein kinase family. VRK subfamily. In terms of assembly, interacts with HDAC1, KAT2B, SETDB1, KDM3A and KDM4A. Associates with the nucleosome through interactions with nucleosome DNA, histone H2A and histone H2B; the interaction with H2A and H2B is mediated by the nucleosome acidic patch, a cluster of negatively charged residues of H2A and H2B forming a cleft within the nucleosome core. Post-translationally, autophosphorylated at various serine and threonine residues. Autophosphorylation does not impair its ability to phosphorylate p53/TP53. Phosphorylation by PLK3 leads to induction of Golgi fragmentation during mitosis.

The protein resides in the nucleus. It localises to the cytoplasm. The protein localises to the cajal body. It catalyses the reaction L-seryl-[protein] + ATP = O-phospho-L-seryl-[protein] + ADP + H(+). The catalysed reaction is L-threonyl-[protein] + ATP = O-phospho-L-threonyl-[protein] + ADP + H(+). Active in presence of Mn(2+), Mg(2+) and Zn(2+), but is not functional with Ca(2+) or Cu(2+). Has a higher affinity for Mn(2+) than for Mg(2+). RAN inhibits its autophosphorylation and its ability to phosphorylate histone H3. In terms of biological role, serine/threonine kinase involved in the regulation of key cellular processes including the cell cycle, nuclear condensation, transcription regulation, and DNA damage response. Controls chromatin organization and remodeling by mediating phosphorylation of histone H3 on 'Thr-4' and histone H2AX (H2aXT4ph). It also phosphorylates KAT5 in response to DNA damage, promoting KAT5 association with chromatin and histone acetyltransferase activity. Is involved in the regulation of cell cycle progression of neural progenitors, and is required for proper cortical neuronal migration. Is involved in neurite elongation and branching in motor neurons, and has an essential role in Cajal bodies assembly, acting through COIL phosphorylation and the control of coilin degradation. Involved in Golgi disassembly during the cell cycle: following phosphorylation by PLK3 during mitosis, it is required to induce Golgi fragmentation. Phosphorylates BANF1: disrupts its ability to bind DNA, reduces its binding to LEM domain-containing proteins and causes its relocalization from the nucleus to the cytoplasm. Phosphorylates TP53BP1 and p53/TP53 on 'Thr-18', preventing the interaction between p53/TP53 and MDM2. Phosphorylates ATF2 which activates its transcriptional activity. Phosphorylates JUN. The polypeptide is Serine/threonine-protein kinase VRK1 (VRK1) (Bos taurus (Bovine)).